We begin with the raw amino-acid sequence, 509 residues long: MSFSPTYSIVMASPLLTSSQMIPTTGSTVGFRSILPFGSLRLTRPYKKTSLFISYCSSVSKKAKTSATDLKPVVERWPEYIPNKLSDKNYVRVYDTTLRDGEQAPGAALTPPQKIEIALQLAKLRVDVMEVGFPVSSEEEFETIKTIAKTVGNEVDEETGYVPVISALARSIQRDIEAAWESVKYAKRPRVGIFTPTSDIHMKYKLQKTREEVIEMVASSVRFAKSLGCKDIQFGCEDAGRSEKEFLCKILGEAIKAGATAVNVADTVGINMPEEYGELVRYLKANTPGIDDIVFSVHCHNDLGVATANTIAGVCAGARQVEVTVNGIGERSGNAPLEEVVMALKCRGAYVMDGVYTRIDTRQIMATSKMVQEYTGLYVQPHKPIVGANCFVHESGVHQDGILKNRSTYEILSPEDVGVVKSQNSGIVLGKLSGRHAVKDRLKELGYELDDEKFNDIFSRFRDLTKQKKRITDADLKALVTTCGDEKLNGANGKESNGYVPVPQISSMV.

Residues 1-55 (MSFSPTYSIVMASPLLTSSQMIPTTGSTVGFRSILPFGSLRLTRPYKKTSLFISY) constitute a chloroplast transit peptide. The region spanning 91 to 365 (VRVYDTTLRD…YTRIDTRQIM (275 aa)) is the Pyruvate carboxyltransferase domain. Residues Asp100, His298, and His300 each coordinate Mn(2+).

This sequence belongs to the alpha-IPM synthase/homocitrate synthase family. In terms of assembly, monomer. Mn(2+) serves as cofactor. Requires Co(2+) as cofactor.

It is found in the plastid. It localises to the chloroplast. It catalyses the reaction 4-methylsulfanyl-2-oxobutanoate + acetyl-CoA + H2O = 2-(2-methylsulfanyl)ethylmalate + CoA + H(+). The protein operates within secondary metabolite biosynthesis. With respect to regulation, inhibited by EDTA, Cu(2+) and Zn(2+). Determines the side chain length of aliphatic glucosinolate structures. Involved in the biosynthesis of glucosinolate derivative natural products such as 6-(methylsulfinyl)hexylisothiocyanate (6-MSITC), a compound found in wasabi with diverse health-promoting properties. Catalyzes the conversion of 4-methylsulfanyl-2-oxobutanoate (4-MTOB) into 2-(2-methylsulfanyl)ethylmalate (2-(2-MT)EM). This Eutrema japonicum (Wasabi plant) protein is Methylthioalkylmalate synthase 1-1, chloroplastic.